Consider the following 106-residue polypeptide: ATP-dependent Clp protease adapter protein ClpS (106 aa).

The protein belongs to the ClpS family. Binds to the N-terminal domain of the chaperone ClpA.

In terms of biological role, involved in the modulation of the specificity of the ClpAP-mediated ATP-dependent protein degradation. This chain is ATP-dependent Clp protease adapter protein ClpS, found in Enterobacter sp. (strain 638).